A 233-amino-acid chain; its full sequence is Large ribosomal subunit protein uL1 (233 aa).

Belongs to the universal ribosomal protein uL1 family. Part of the 50S ribosomal subunit.

Its function is as follows. Binds directly to 23S rRNA. The L1 stalk is quite mobile in the ribosome, and is involved in E site tRNA release. Functionally, protein L1 is also a translational repressor protein, it controls the translation of the L11 operon by binding to its mRNA. In Shewanella halifaxensis (strain HAW-EB4), this protein is Large ribosomal subunit protein uL1.